A 156-amino-acid chain; its full sequence is uncharacterized protein (156 aa).

The next 2 helical transmembrane spans lie at 46 to 66 and 114 to 134; these read GLVL…AGVV and IIDI…IVAL.

The protein localises to the cell membrane. This is an uncharacterized protein from Haemophilus influenzae (strain ATCC 51907 / DSM 11121 / KW20 / Rd).